The primary structure comprises 263 residues: Endonuclease 8 (263 aa).

Catalysis depends on proline 2, which acts as the Schiff-base intermediate with DNA. Catalysis depends on glutamate 3, which acts as the Proton donor. Lysine 53 serves as the catalytic Proton donor; for beta-elimination activity. DNA is bound by residues glutamine 70, arginine 125, and asparagine 169. Residues 229-263 (KVFHRDGELCERCGGIIEKTTLSSRPFYWCPGCQH) form an FPG-type zinc finger. The active-site Proton donor; for delta-elimination activity is the arginine 253.

It belongs to the FPG family. Requires Zn(2+) as cofactor.

The enzyme catalyses 2'-deoxyribonucleotide-(2'-deoxyribose 5'-phosphate)-2'-deoxyribonucleotide-DNA = a 3'-end 2'-deoxyribonucleotide-(2,3-dehydro-2,3-deoxyribose 5'-phosphate)-DNA + a 5'-end 5'-phospho-2'-deoxyribonucleoside-DNA + H(+). Its function is as follows. Involved in base excision repair of DNA damaged by oxidation or by mutagenic agents. Acts as a DNA glycosylase that recognizes and removes damaged bases. Has a preference for oxidized pyrimidines, such as thymine glycol, 5,6-dihydrouracil and 5,6-dihydrothymine. Has AP (apurinic/apyrimidinic) lyase activity and introduces nicks in the DNA strand. Cleaves the DNA backbone by beta-delta elimination to generate a single-strand break at the site of the removed base with both 3'- and 5'-phosphates. The chain is Endonuclease 8 from Escherichia coli O157:H7.